The chain runs to 412 residues: MYNIDTIKKIDSQLAEAIELEVNRQRNKIELIASENFVSDAVIEALGTPLTNKYAEGYPGKRYYGGCEYVDIVEQLAIDRAKQIFGAEHANVQPHSGAQANTAVYFAFLNPGDTILGMNLAHGGHLSHGSPVNISGKYYKVVPYGVREDNCYIDYDELRKTAKENSPKIIVAGASAYPRILDFKAFREIADEVGAILMVDMAHIAGLVAAGVHPSPVPYADVVTTTTHKTLRGPRGGMILCKQEYAKKIDSAVFPGNQGGPLMHVIAAKAVSFKEALTDDFKIYQQNIVKNAKALASALMEKGFKLVSDGTDNHLMLINLTNMNITGKEAQHKLDEVCITCNKNGIPFDTQSPFITSGIRLGTPAVTSRGMNEEDMKEIADLIHLTISDFENSRTNIIRRVEALCNKYPLYE.

(6S)-5,6,7,8-tetrahydrofolate-binding positions include L120 and 124–126 (GHL). K229 is modified (N6-(pyridoxal phosphate)lysine). 352–354 (SPF) is a binding site for (6S)-5,6,7,8-tetrahydrofolate.

The protein belongs to the SHMT family. In terms of assembly, homodimer. Pyridoxal 5'-phosphate serves as cofactor.

It is found in the cytoplasm. It carries out the reaction (6R)-5,10-methylene-5,6,7,8-tetrahydrofolate + glycine + H2O = (6S)-5,6,7,8-tetrahydrofolate + L-serine. The protein operates within one-carbon metabolism; tetrahydrofolate interconversion. It participates in amino-acid biosynthesis; glycine biosynthesis; glycine from L-serine: step 1/1. Catalyzes the reversible interconversion of serine and glycine with tetrahydrofolate (THF) serving as the one-carbon carrier. This reaction serves as the major source of one-carbon groups required for the biosynthesis of purines, thymidylate, methionine, and other important biomolecules. Also exhibits THF-independent aldolase activity toward beta-hydroxyamino acids, producing glycine and aldehydes, via a retro-aldol mechanism. The polypeptide is Serine hydroxymethyltransferase (Ruminiclostridium cellulolyticum (strain ATCC 35319 / DSM 5812 / JCM 6584 / H10) (Clostridium cellulolyticum)).